Here is a 45-residue protein sequence, read N- to C-terminus: Photosystem II reaction center protein K (45 aa).

The propeptide occupies 1-8 (MEAALLLA). A helical transmembrane segment spans residues 24–44 (LPLIPLFFLLLAFVWQAAVGF).

Belongs to the PsbK family. In terms of assembly, PSII is composed of 1 copy each of membrane proteins PsbA, PsbB, PsbC, PsbD, PsbE, PsbF, PsbH, PsbI, PsbJ, PsbK, PsbL, PsbM, PsbT, PsbX, PsbY, PsbZ, Psb30/Ycf12, peripheral proteins PsbO, CyanoQ (PsbQ), PsbU, PsbV and a large number of cofactors. It forms dimeric complexes.

The protein localises to the cellular thylakoid membrane. Its function is as follows. One of the components of the core complex of photosystem II (PSII). PSII is a light-driven water:plastoquinone oxidoreductase that uses light energy to abstract electrons from H(2)O, generating O(2) and a proton gradient subsequently used for ATP formation. It consists of a core antenna complex that captures photons, and an electron transfer chain that converts photonic excitation into a charge separation. The sequence is that of Photosystem II reaction center protein K from Picosynechococcus sp. (strain ATCC 27264 / PCC 7002 / PR-6) (Agmenellum quadruplicatum).